The chain runs to 243 residues: UPF0246 protein gbs2036 (243 aa).

The protein belongs to the UPF0246 family.

The sequence is that of UPF0246 protein gbs2036 from Streptococcus agalactiae serotype III (strain NEM316).